A 277-amino-acid chain; its full sequence is Co-chaperone protein DjlA (277 aa).

At 1 to 4 (MWGK) the chain is on the periplasmic side. The chain crosses the membrane as a helical span at residues 5–28 (ILGAFFGFLLGGPFGLLLGLFLGH). Over 29–277 (KFDKARRNVY…DMIRKEKGFK (249 aa)) the chain is Cytoplasmic. A J domain is found at 211–277 (DAYEVLGVTE…DMIRKEKGFK (67 aa)).

Homodimer.

Its subcellular location is the cell inner membrane. In terms of biological role, regulatory DnaK co-chaperone. Direct interaction between DnaK and DjlA is needed for the induction of the wcaABCDE operon, involved in the synthesis of a colanic acid polysaccharide capsule, possibly through activation of the RcsB/RcsC phosphotransfer signaling pathway. The colanic acid capsule may help the bacterium survive conditions outside the host. The polypeptide is Co-chaperone protein DjlA (Photobacterium profundum (strain SS9)).